Reading from the N-terminus, the 142-residue chain is Large ribosomal subunit protein uL11 (142 aa).

It belongs to the universal ribosomal protein uL11 family. In terms of assembly, part of the ribosomal stalk of the 50S ribosomal subunit. Interacts with L10 and the large rRNA to form the base of the stalk. L10 forms an elongated spine to which L12 dimers bind in a sequential fashion forming a multimeric L10(L12)X complex. Post-translationally, one or more lysine residues are methylated.

Its function is as follows. Forms part of the ribosomal stalk which helps the ribosome interact with GTP-bound translation factors. This is Large ribosomal subunit protein uL11 from Shewanella sp. (strain W3-18-1).